Consider the following 342-residue polypeptide: Anthranilate phosphoribosyltransferase (342 aa).

5-phospho-alpha-D-ribose 1-diphosphate is bound by residues Gly81, 84–85, 91–94, 109–117, and Ser121; these read GD, NVSS, and KHGNRGVSS. Gly81 contacts anthranilate. Ser93 lines the Mg(2+) pocket. Asn112 provides a ligand contact to anthranilate. An anthranilate-binding site is contributed by Arg167. Mg(2+)-binding residues include Asp226 and Glu227.

This sequence belongs to the anthranilate phosphoribosyltransferase family. As to quaternary structure, homodimer. The cofactor is Mg(2+).

It catalyses the reaction N-(5-phospho-beta-D-ribosyl)anthranilate + diphosphate = 5-phospho-alpha-D-ribose 1-diphosphate + anthranilate. Its pathway is amino-acid biosynthesis; L-tryptophan biosynthesis; L-tryptophan from chorismate: step 2/5. In terms of biological role, catalyzes the transfer of the phosphoribosyl group of 5-phosphorylribose-1-pyrophosphate (PRPP) to anthranilate to yield N-(5'-phosphoribosyl)-anthranilate (PRA). This Marinobacter nauticus (strain ATCC 700491 / DSM 11845 / VT8) (Marinobacter aquaeolei) protein is Anthranilate phosphoribosyltransferase.